The following is a 268-amino-acid chain: Tryptophan synthase alpha chain (268 aa).

Residues E40 and D51 each act as proton acceptor in the active site.

The protein belongs to the TrpA family. In terms of assembly, tetramer of two alpha and two beta chains.

The enzyme catalyses (1S,2R)-1-C-(indol-3-yl)glycerol 3-phosphate + L-serine = D-glyceraldehyde 3-phosphate + L-tryptophan + H2O. Its pathway is amino-acid biosynthesis; L-tryptophan biosynthesis; L-tryptophan from chorismate: step 5/5. Functionally, the alpha subunit is responsible for the aldol cleavage of indoleglycerol phosphate to indole and glyceraldehyde 3-phosphate. This is Tryptophan synthase alpha chain from Geobacillus kaustophilus (strain HTA426).